Reading from the N-terminus, the 78-residue chain is D-alanyl carrier protein (78 aa).

The Carrier domain maps to 1-78; sequence MEFREQVLDL…KIVEALEELK (78 aa). The residue at position 36 (Ser36) is an O-(pantetheine 4'-phosphoryl)serine.

Belongs to the DltC family. In terms of processing, 4'-phosphopantetheine is transferred from CoA to a specific serine of apo-DCP.

It localises to the cytoplasm. Its pathway is cell wall biogenesis; lipoteichoic acid biosynthesis. Carrier protein involved in the D-alanylation of lipoteichoic acid (LTA). The loading of thioester-linked D-alanine onto DltC is catalyzed by D-alanine--D-alanyl carrier protein ligase DltA. The DltC-carried D-alanyl group is further transferred to cell membrane phosphatidylglycerol (PG) by forming an ester bond, probably catalyzed by DltD. D-alanylation of LTA plays an important role in modulating the properties of the cell wall in Gram-positive bacteria, influencing the net charge of the cell wall. The sequence is that of D-alanyl carrier protein from Staphylococcus carnosus (strain TM300).